The primary structure comprises 95 residues: Co-chaperonin GroES (95 aa).

This sequence belongs to the GroES chaperonin family. In terms of assembly, heptamer of 7 subunits arranged in a ring. Interacts with the chaperonin GroEL.

Its subcellular location is the cytoplasm. In terms of biological role, together with the chaperonin GroEL, plays an essential role in assisting protein folding. The GroEL-GroES system forms a nano-cage that allows encapsulation of the non-native substrate proteins and provides a physical environment optimized to promote and accelerate protein folding. GroES binds to the apical surface of the GroEL ring, thereby capping the opening of the GroEL channel. This is Co-chaperonin GroES from Bordetella petrii (strain ATCC BAA-461 / DSM 12804 / CCUG 43448).